The chain runs to 782 residues: LPS-assembly protein LptD (782 aa).

A signal peptide spans 1 to 23 (MNKKHTLISLAILTALYSQQSLA).

It belongs to the LptD family. In terms of assembly, component of the lipopolysaccharide transport and assembly complex. Interacts with LptE and LptA.

It is found in the cell outer membrane. Functionally, together with LptE, is involved in the assembly of lipopolysaccharide (LPS) at the surface of the outer membrane. The sequence is that of LPS-assembly protein LptD from Haemophilus influenzae (strain ATCC 51907 / DSM 11121 / KW20 / Rd).